Reading from the N-terminus, the 191-residue chain is Corticoliberin (191 aa).

The first 24 residues, 1 to 24 (MRLPLLVSAGVLLVALLPCPPCRA), serve as a signal peptide directing secretion. The propeptide occupies 25 to 148 (LLSRGPVLGA…RQEAPERERR (124 aa)). The disordered stretch occupies residues 115-153 (PLPRRPLDSPSGPAERGAENALSSRQEAPERERRSEEPP). A compositionally biased stretch (basic and acidic residues) spans 141 to 151 (EAPERERRSEE). I189 is subject to Isoleucine amide.

This sequence belongs to the sauvagine/corticotropin-releasing factor/urotensin I family. Interacts (via C-terminus) with CRFR1 (via N-terminal extracellular domain). In terms of tissue distribution, produced by the hypothalamus.

Its subcellular location is the secreted. Functionally, hormone regulating the release of corticotropin from pituitary gland. Induces NLRP6 in intestinal epithelial cells, hence may influence gut microbiota profile. The chain is Corticoliberin (CRH) from Sus scrofa (Pig).